The primary structure comprises 358 residues: GTPase Obg (358 aa).

One can recognise an Obg domain in the interval methionine 1 to isoleucine 158. The 197-residue stretch at alanine 159–arginine 355 folds into the OBG-type G domain. GTP-binding positions include glycine 165–serine 172, phenylalanine 190–isoleucine 194, aspartate 212–glycine 215, serine 280–aspartate 283, and serine 336–alanine 338. Residues serine 172 and threonine 192 each coordinate Mg(2+).

It belongs to the TRAFAC class OBG-HflX-like GTPase superfamily. OBG GTPase family. In terms of assembly, monomer. Mg(2+) is required as a cofactor.

The protein resides in the cytoplasm. In terms of biological role, an essential GTPase which binds GTP, GDP and possibly (p)ppGpp with moderate affinity, with high nucleotide exchange rates and a fairly low GTP hydrolysis rate. Plays a role in control of the cell cycle, stress response, ribosome biogenesis and in those bacteria that undergo differentiation, in morphogenesis control. In Wolinella succinogenes (strain ATCC 29543 / DSM 1740 / CCUG 13145 / JCM 31913 / LMG 7466 / NCTC 11488 / FDC 602W) (Vibrio succinogenes), this protein is GTPase Obg.